The sequence spans 111 residues: X antigen family member 2 (111 aa).

2 disordered regions span residues 1–61 and 77–111; these read MSWR…AAEI and KTGD…KSQV. Basic and acidic residues predominate over residues 86–111; it reads TDVKGKILPKAEHFKMPEAGEGKSQV.

Belongs to the GAGE family.

This is X antigen family member 2 (XAGE2) from Homo sapiens (Human).